The chain runs to 251 residues: Protein FAM216A (251 aa).

Polar residues predominate over residues 1 to 16 (MPNQGPVSDWTECSSS). Positions 1–49 (MPNQGPVSDWTECSSSAEPPAVARAEGGGGGSAGHSYYQNSKDRIKDGH) are disordered.

This sequence belongs to the FAM216 family.

This Bos taurus (Bovine) protein is Protein FAM216A (FAM216A).